We begin with the raw amino-acid sequence, 209 residues long: Large ribosomal subunit protein uL3 (209 aa).

The tract at residues 128 to 166 (FGGGSRTHGQSDRLRAPGSVGGSSDPSRTFKGTRMAGRM) is disordered.

Belongs to the universal ribosomal protein uL3 family. As to quaternary structure, part of the 50S ribosomal subunit. Forms a cluster with proteins L14 and L19.

One of the primary rRNA binding proteins, it binds directly near the 3'-end of the 23S rRNA, where it nucleates assembly of the 50S subunit. The polypeptide is Large ribosomal subunit protein uL3 (Chlorobaculum parvum (strain DSM 263 / NCIMB 8327) (Chlorobium vibrioforme subsp. thiosulfatophilum)).